Reading from the N-terminus, the 395-residue chain is S-adenosylmethionine synthase (395 aa).

Histidine 16 contributes to the ATP binding site. Aspartate 18 provides a ligand contact to Mg(2+). Residue glutamate 44 coordinates K(+). Residues glutamate 57 and glutamine 100 each contribute to the L-methionine site. The interval 100–110 (QSPDIAQGVDR) is flexible loop. ATP-binding positions include 167–169 (DAK), 233–234 (RF), aspartate 242, 248–249 (RK), alanine 265, and lysine 269. Aspartate 242 contacts L-methionine. Position 273 (lysine 273) interacts with L-methionine.

The protein belongs to the AdoMet synthase family. In terms of assembly, homotetramer; dimer of dimers. It depends on Mg(2+) as a cofactor. K(+) serves as cofactor.

Its subcellular location is the cytoplasm. The enzyme catalyses L-methionine + ATP + H2O = S-adenosyl-L-methionine + phosphate + diphosphate. The protein operates within amino-acid biosynthesis; S-adenosyl-L-methionine biosynthesis; S-adenosyl-L-methionine from L-methionine: step 1/1. In terms of biological role, catalyzes the formation of S-adenosylmethionine (AdoMet) from methionine and ATP. The overall synthetic reaction is composed of two sequential steps, AdoMet formation and the subsequent tripolyphosphate hydrolysis which occurs prior to release of AdoMet from the enzyme. This Burkholderia vietnamiensis (strain G4 / LMG 22486) (Burkholderia cepacia (strain R1808)) protein is S-adenosylmethionine synthase.